We begin with the raw amino-acid sequence, 317 residues long: MHILEFEKPIAELEGKIEELRHLSDGGDVNIADEVSKLQAKVDKLLRSTYAKLTPWQKTQVARHPERPHTLAYISTLIEDFTPLAGDRAFAEDEAIIGGLGRFRGRSVMIIGHEKGHDTETRLKHNFGMAKPEGYRKAKRLMEMADHFQVPIITLVDTAGAYPGVDAEARGQAEAIARSIETCLNVRVPLVSVIIGEGGSGGAIALATGNTVLMLEHAIYSVISPEGCASILWRSAENAKDAAEQLRLTAQDLHKLSIIDSVVPEPMGGAHRNPDLMMQTLSMALDSALRDLSGLDGGVLRARRREKFLEMGRAGLS.

The CoA carboxyltransferase C-terminal domain maps to 41-291; the sequence is KVDKLLRSTY…SMALDSALRD (251 aa).

Belongs to the AccA family. As to quaternary structure, acetyl-CoA carboxylase is a heterohexamer composed of biotin carboxyl carrier protein (AccB), biotin carboxylase (AccC) and two subunits each of ACCase subunit alpha (AccA) and ACCase subunit beta (AccD).

It localises to the cytoplasm. The catalysed reaction is N(6)-carboxybiotinyl-L-lysyl-[protein] + acetyl-CoA = N(6)-biotinyl-L-lysyl-[protein] + malonyl-CoA. It participates in lipid metabolism; malonyl-CoA biosynthesis; malonyl-CoA from acetyl-CoA: step 1/1. Component of the acetyl coenzyme A carboxylase (ACC) complex. First, biotin carboxylase catalyzes the carboxylation of biotin on its carrier protein (BCCP) and then the CO(2) group is transferred by the carboxyltransferase to acetyl-CoA to form malonyl-CoA. The sequence is that of Acetyl-coenzyme A carboxylase carboxyl transferase subunit alpha from Paramagnetospirillum magneticum (strain ATCC 700264 / AMB-1) (Magnetospirillum magneticum).